The following is a 237-amino-acid chain: uncharacterized protein (237 aa).

The 206-residue stretch at 13 to 218 (VVGLSGGVAT…KSWKPYIFRV (206 aa)) folds into the DPCK domain. 18–25 (GGVATGKS) is an ATP binding site.

This sequence belongs to the CoaE family.

This is an uncharacterized protein from Caenorhabditis elegans.